A 67-amino-acid chain; its full sequence is Stomoxyn (67 aa).

The signal sequence occupies residues 1–24 (MNFYKYLVVLVVLVLCLSATQTEA). T66 is modified (threonine amide).

In terms of tissue distribution, constitutively expressed in the adult anterior midgut; proventriculus, thoracic and reservoir regions.

The protein localises to the secreted. Has antimicrobial activity against most Gram-positive and Gram-negative bacteria, filamentous fungi and yeasts tested. Has trypanolytic effect on T.b.rhodesiense and limited hemolytic activity against bovine red blood cells. Functionally, may play an important role in protecting the stored blood in the anterior midgut from microorganisms prior to digestion. Adopts an amphipathic alpha-helical structure only in the presence of an organic solvent that mimics a phospholipid membrane. The protein is Stomoxyn of Stomoxys calcitrans (Stable fly).